The sequence spans 275 residues: Tumor necrosis factor-inducible gene 6 protein (275 aa).

The first 17 residues, 1–17 (MVVLLCLCVLLWEEAHG), serve as a signal peptide directing secretion. Residues 36-129 (GVYHREARAG…SERWDAYCYN (94 aa)) form the Link domain. Intrachain disulfides connect cysteine 58–cysteine 127, cysteine 82–cysteine 103, and cysteine 135–cysteine 161. An N-linked (GlcNAc...) asparagine glycan is attached at asparagine 118. Positions 135–247 (CGGVFTDPKR…GGFQIKYVTV (113 aa)) constitute a CUB domain. The Ca(2+) site is built by glutamate 183, aspartate 191, aspartate 232, serine 234, and valine 235. An intrachain disulfide couples cysteine 188 to cysteine 210. The span at 253 to 264 (SSQAKNTSTTGN) shows a compositional bias: polar residues. A disordered region spans residues 253–275 (SSQAKNTSTTGNKKFLPGRFSHL). Asparagine 258 carries an N-linked (GlcNAc...) asparagine glycan.

As to quaternary structure, interacts (via Link domain) with inter-alpha-inhibitor (I-alpha-I) component bikunin. Interacts with ITIH2/HC2; this interaction is required for transesterification of the HC to hyaluronan. Interacts (via Link and CUB domains) with ITIH1. Chondroitin sulfate may be required for the stability of the complex. Interacts (via Link domain) with various C-X-C and C-C chemokines including PF4, CXCL8, CXCL11, CXCL12, CCL2, CCL7, CCL19, CCL21, and CCL27; this interaction interferes with chemokine binding to glycosaminoglycans. Interacts (primarily via Link domain) with BMP2; this interaction is inhibited by hyaluronan. Interacts (via both Link and CUB domains) with TNFSF11. Interacts (via CUB domain) with FN1 (via type III repeats 9-14); this interaction enhances fibronectin fibril assembly. TNFAIP6 may act as a bridging molecule between FN1 and THBS1. Expressed in epiphyseal and metaphyseal bone marrow of both the femur and tibia (at protein level).

It is found in the secreted. Functionally, major regulator of extracellular matrix organization during tissue remodeling. Catalyzes the transfer of a heavy chain (HC) from inter-alpha-inhibitor (I-alpha-I) complex to hyaluronan. Cleaves the ester bond between the C-terminus of the HC and GalNAc residue of the chondroitin sulfate chain in I-alpha-I complex followed by transesterification of the HC to hyaluronan. In the process, potentiates the antiprotease function of I-alpha-I complex through release of free bikunin. Acts as a catalyst in the formation of hyaluronan-HC oligomers and hyaluronan-rich matrix surrounding the cumulus cell-oocyte complex, a necessary step for oocyte fertilization. Assembles hyaluronan in pericellular matrices that serve as platforms for receptor clustering and signaling. Enables binding of hyaluronan deposited on the surface of macrophages to LYVE1 on lymphatic endothelium and facilitates macrophage extravasation. Alters hyaluronan binding to functionally latent CD44 on vascular endothelium, switching CD44 into an active state that supports leukocyte rolling. Modulates the interaction of chemokines with extracellular matrix components and proteoglycans on endothelial cell surface, likely preventing chemokine gradient formation. In a negative feedback mechanism, may limit excessive neutrophil recruitment at inflammatory sites by antagonizing the association of CXCL8 with glycosaminoglycans on vascular endothelium. Has a role in osteogenesis and bone remodeling. Inhibits BMP2-dependent differentiation of mesenchymal stem cell to osteoblasts. Protects against bone erosion during inflammation by inhibiting TNFSF11/RANKL-dependent osteoclast activation. The chain is Tumor necrosis factor-inducible gene 6 protein (Tnfaip6) from Mus musculus (Mouse).